The chain runs to 340 residues: Flap endonuclease 1 (340 aa).

Residues 1 to 98 are N-domain; it reads MGLNLKDLVV…AEIERRKQIK (98 aa). Mg(2+) contacts are provided by Asp27, Asp80, Glu152, Glu154, Asp173, Asp175, and Asp236. The segment at 116–258 is I-domain; the sequence is DARKYAQQTT…TALKMIKQHS (143 aa).

The protein belongs to the XPG/RAD2 endonuclease family. FEN1 subfamily. Interacts with PCNA. PCNA stimulates the nuclease activity without altering cleavage specificity. Requires Mg(2+) as cofactor.

Functionally, structure-specific nuclease with 5'-flap endonuclease and 5'-3' exonuclease activities involved in DNA replication and repair. During DNA replication, cleaves the 5'-overhanging flap structure that is generated by displacement synthesis when DNA polymerase encounters the 5'-end of a downstream Okazaki fragment. Binds the unpaired 3'-DNA end and kinks the DNA to facilitate 5' cleavage specificity. Cleaves one nucleotide into the double-stranded DNA from the junction in flap DNA, leaving a nick for ligation. Also involved in the base excision repair (BER) pathway. Acts as a genome stabilization factor that prevents flaps from equilibrating into structures that lead to duplications and deletions. Also possesses 5'-3' exonuclease activity on nicked or gapped double-stranded DNA. The sequence is that of Flap endonuclease 1 from Nitrosopumilus maritimus (strain SCM1).